The sequence spans 248 residues: Small ribosomal subunit protein uS3 (248 aa).

Residues Ile39–Pro108 enclose the KH type-2 domain. A disordered region spans residues Glu214–Glu248. Positions Arg221–Ala234 are enriched in basic and acidic residues. Residues Asn235 to Glu248 are compositionally biased toward basic residues.

This sequence belongs to the universal ribosomal protein uS3 family. Part of the 30S ribosomal subunit. Forms a tight complex with proteins S10 and S14.

Functionally, binds the lower part of the 30S subunit head. Binds mRNA in the 70S ribosome, positioning it for translation. The polypeptide is Small ribosomal subunit protein uS3 (Deinococcus deserti (strain DSM 17065 / CIP 109153 / LMG 22923 / VCD115)).